A 254-amino-acid polypeptide reads, in one-letter code: D-aminoacyl-tRNA deacylase (254 aa).

Belongs to the DtdA deacylase family. In terms of assembly, monomer. It depends on Zn(2+) as a cofactor.

The enzyme catalyses a D-aminoacyl-tRNA + H2O = a tRNA + a D-alpha-amino acid + H(+). It catalyses the reaction glycyl-tRNA(Ala) + H2O = tRNA(Ala) + glycine + H(+). Functionally, D-aminoacyl-tRNA deacylase with broad substrate specificity. By recycling D-aminoacyl-tRNA to D-amino acids and free tRNA molecules, this enzyme counteracts the toxicity associated with the formation of D-aminoacyl-tRNA entities in vivo. This is D-aminoacyl-tRNA deacylase from Methanococcus vannielii (strain ATCC 35089 / DSM 1224 / JCM 13029 / OCM 148 / SB).